A 159-amino-acid polypeptide reads, in one-letter code: 2-C-methyl-D-erythritol 2,4-cyclodiphosphate synthase (159 aa).

A divalent metal cation-binding residues include Asp10 and His12. 4-CDP-2-C-methyl-D-erythritol 2-phosphate-binding positions include 10–12 and 36–37; these read DVH and HS. His44 provides a ligand contact to a divalent metal cation. Residues 58 to 60, 134 to 137, Phe141, and Arg144 contribute to the 4-CDP-2-C-methyl-D-erythritol 2-phosphate site; these read DIG and TTTE.

The protein belongs to the IspF family. In terms of assembly, homotrimer. A divalent metal cation is required as a cofactor.

The enzyme catalyses 4-CDP-2-C-methyl-D-erythritol 2-phosphate = 2-C-methyl-D-erythritol 2,4-cyclic diphosphate + CMP. It functions in the pathway isoprenoid biosynthesis; isopentenyl diphosphate biosynthesis via DXP pathway; isopentenyl diphosphate from 1-deoxy-D-xylulose 5-phosphate: step 4/6. In terms of biological role, involved in the biosynthesis of isopentenyl diphosphate (IPP) and dimethylallyl diphosphate (DMAPP), two major building blocks of isoprenoid compounds. Catalyzes the conversion of 4-diphosphocytidyl-2-C-methyl-D-erythritol 2-phosphate (CDP-ME2P) to 2-C-methyl-D-erythritol 2,4-cyclodiphosphate (ME-CPP) with a corresponding release of cytidine 5-monophosphate (CMP). This Bacteroides fragilis (strain ATCC 25285 / DSM 2151 / CCUG 4856 / JCM 11019 / LMG 10263 / NCTC 9343 / Onslow / VPI 2553 / EN-2) protein is 2-C-methyl-D-erythritol 2,4-cyclodiphosphate synthase.